We begin with the raw amino-acid sequence, 2327 residues long: MDDTNSNINQSNESQHLEEKAKKWIQLNNKKYSEKRKFGAVEIRKEDMPPEHLRKIIKDHGDMSNRRFRDDKRVYLGALKYMPHAILKLLENIPMPWEQVKYVKVLYHLSGAITFVNEIPFVIEPIYIAQWATMWVTMRREKRDRTHFRRMKFPLFDDEEPPLDYSDNILDNEVEDPIQMELDENDDSEVIDWLYDSKPLVNTKFVNGSSYRKWRLNLPIMSTLFRLASPLLSDLTDSNYFYLFDDNSFFTSKALNMAIPGGPKFEPLFRDVDDDDEDWNEFNDINKVIIRNKIRTEYKIAFPYLYNSRPRKVKTPTYHTPNNCYIKNDSPDLPGFYFGAALNPIPSYKTSGNKNEQSEYGTEDDEFQLPEEIETILSKTEIEHDNLANGIQLYWAPRPFSLRSGTTRRAEDIPLVKSWYKEHCPSEHPVKVRVSYQKLLKCHVLNKLHHRKPKAQTKRNLFKSLKATKFFQSTEIDWVEAGLQVCRQGYNMLNLLIHRKNLNYLHLDYNFYLKPIKTLTTKERKKSRFGNAFHLCREILRLTKLVVDVHVKFRLGDADAFQLADAIQYLFSHLGLLTGMYKYKYRLMRQIRMCKDLKHLIYYRFNTGAVGKGPGCGFWAPMWRVWLFFLRGIVPLLERWLGNLLARQFEGRQTKGMAKTVTKQRVESHFDYELRAAVMHDILDMMPEGIKANKSRIILQHLSEAWRCWKSNIPWKVPGLPIPIENMILRYVKSKADWWTNIAHYNRERIKRGATIDKTASKKNLGRLTRLWLKAEQERQHNYLKDGPYVSAEEAVAIYTTTVHWLEKRRFSAIPFPQTSYKHDIKILTLALERLKEAYSVKSRLNQSQREELSLVEQAYDNPHDALARIKRHLLTQRTFKEVGIEFMDMYTHLVPIYDVDPFEKITDAYLDQYLWYEADKRQLFPNWVKPSDNEPPPVLIHKWCQGINNLDQVWETSQGECVVLLETQFSKVYEKMDLTLMNRLLRLIVDQNIADYMSGKNNVVINYKDMNHTNSYGLIRGLQFASFIFQYYGLVLDLLVLGLERASALAGPPNLPNSFLTFPSVQTETAHPIRLYSRYVDRIHVLYKFTADEARKLIQKYMSEHPDPNNENVVGYNNKKCWPRDCRMRLMKHDVNLGRAVFWQIKNRLPRSLTTIDWEDSFVSVYSKDNPNLLMNMAGFDIRILPKCRTPLDQLAPKDAVWSLQNVNTKERTAQAFLRVDTESQERFENRIRMILMASGSTTFTKIVNKWNTALIGLMTYYREAVVTTREMLDILVRCENKIQTRVKIGLNSKMPNRFPPVVFYTPKELGGLGMLSMGHVLIPQSDLKYSKQTDTGITHFTSGMSHDEDQLIPNLYRYIQPWEQEIKDSQRVWAEYAIKYEEAKSQNKNLTLEDLEDSWDRGIPRINTLFQKSRHTLAYDKGWRVRTDWKQYQVLKNNPFWWTNQRHDGKLWNLNNYRTDIIQALGGVEGILEHTLFKGTYFPTWEGLFWEKASGFEESMKYKKLTHAQRSGLNQIPNRRFTLWWSPTINRKNVYVGFQVQLDLTGIFMHGKIPTLKISLIQIFRAHLWQKIHESLVMDLCQVFDQELDNLEISVVNKEAIHPRKSYKMNSSCADILLRATHKWQVSRPSLLNDNRDTYDNTTTQYWLDVQLKWGDFDSHDIERYSRAKFLDYTTDSMSLYPSPTGCLIGLDLAYNIYSSFGNWFLGVKPLVQKAMAKILKSNPALYVLRERIRKGLQLYSSEPTEPYLSSQNFGELFSNKIMWFVDDSNVYRVTIHKTFEGNLTTKPINGAIFIFNPRTGQLFLKIIHTDVWLGQKRLGQLAKWKTAEEVAALIRSLPVEEQPKQIIATRKGMMDPLEVHLLDFPNIVIQGSELQLPFQACLKVEKFGDLILKATEPKMVLFNIYDDWLSTIHSYTAFLRLILILRALHVNLERTKIILKPNKNVITQPHHIWPTLTEQEWLTVEGSLKDLILADFGKRNNVNVASLTQSEIRDIILGMEISAPSQQREDQIAEIEKQKTEASHLTAVTVRSTNIHGEEIITTATSPHEQKVFSSKTDWRVRAISATNLHLRTNQIYVNSDNAKETGGFTYVFPKNILKKFITIADLRTQIMGYCYGISPPDNPSVKEIRCIVMPPQWGTPVHVTVPNQLPEHEYLKDLEPLGWIHTQPTELPQLSPQDVITHSKIMSDNKSWDGEKTVIISVSVAWPCTLTAYHLTPSGFEWGKNNKDSLNYQGYQPQFYEKVQMLLSDRFLGFYMVPDRGSWNYNFMGVKHSTNMTYGLKLDYPKNFYDESHRPAHFQNWTQMAPSANDDEENQPENENLFE.

Over residues 1–14 (MDDTNSNINQSNES) the composition is skewed to polar residues. The disordered stretch occupies residues 1–20 (MDDTNSNINQSNESQHLEEK). Residues 801 to 1292 (TTVHWLEKRR…KIQTRVKIGL (492 aa)) are reverse transcriptase homology domain. Positions 1293–1566 (NSKMPNRFPP…TLKISLIQIF (274 aa)) are linker. The interval 1502–1515 (MKYKKLTHAQRSGL) is important for branch point selection. Residues 1570–1740 (LWQKIHESLV…LRERIRKGLQ (171 aa)) are restriction endonuclease homology domain. The interval 1657–2023 (GDFDSHDIER…QIAEIEKQKT (367 aa)) is involved in interaction with pre-mRNA 5' splice site. The segment at 1755-2008 (NFGELFSNKI…ILGMEISAPS (254 aa)) is RNase H homology domain. One can recognise an MPN domain in the interval 2093–2223 (TYVFPKNILK…LTAYHLTPSG (131 aa)).

As to quaternary structure, part of the U5 snRNP complex and of the U4/U6-U5 tri-snRNP complex.

It is found in the nucleus speckle. Functions as a scaffold that mediates the ordered assembly of spliceosomal proteins and snRNAs. Required for the assembly of the U4/U6-U5 tri-snRNP complex. Functions as a scaffold that positions spliceosomal U2, U5 and U6 snRNAs at splice sites on pre-mRNA substrates, so that splicing can occur. Interacts with both the 5' and the 3' splice site. The protein is Pre-mRNA-processing-splicing factor 8 homolog (prpf8) of Dictyostelium discoideum (Social amoeba).